The chain runs to 369 residues: Histidinol-phosphate aminotransferase 2 (369 aa).

An N6-(pyridoxal phosphate)lysine modification is found at lysine 231.

This sequence belongs to the class-II pyridoxal-phosphate-dependent aminotransferase family. Histidinol-phosphate aminotransferase subfamily. As to quaternary structure, homodimer. Pyridoxal 5'-phosphate is required as a cofactor.

It carries out the reaction L-histidinol phosphate + 2-oxoglutarate = 3-(imidazol-4-yl)-2-oxopropyl phosphate + L-glutamate. Its pathway is amino-acid biosynthesis; L-histidine biosynthesis; L-histidine from 5-phospho-alpha-D-ribose 1-diphosphate: step 7/9. The protein is Histidinol-phosphate aminotransferase 2 of Legionella pneumophila (strain Paris).